Consider the following 167-residue polypeptide: UPF0178 protein bll3966 (167 aa).

The protein belongs to the UPF0178 family.

This is UPF0178 protein bll3966 from Bradyrhizobium diazoefficiens (strain JCM 10833 / BCRC 13528 / IAM 13628 / NBRC 14792 / USDA 110).